Reading from the N-terminus, the 217-residue chain is Cytidylate kinase (217 aa).

Position 11–19 (11–19 (GPAGAGKST)) interacts with ATP.

It belongs to the cytidylate kinase family. Type 1 subfamily.

Its subcellular location is the cytoplasm. The catalysed reaction is CMP + ATP = CDP + ADP. It carries out the reaction dCMP + ATP = dCDP + ADP. This chain is Cytidylate kinase, found in Clostridium perfringens (strain SM101 / Type A).